A 384-amino-acid chain; its full sequence is Dual-specificity RNA methyltransferase RlmN (384 aa).

Glu-105 (proton acceptor) is an active-site residue. In terms of domain architecture, Radical SAM core spans 111-350 (EDDRATLCVS…TIVRKTRGDD (240 aa)). Cys-118 and Cys-355 are oxidised to a cystine. The [4Fe-4S] cluster site is built by Cys-125, Cys-129, and Cys-132. S-adenosyl-L-methionine-binding positions include 179-180 (GE), Ser-211, 233-235 (SLH), and Asn-312. The active-site S-methylcysteine intermediate is the Cys-355.

It belongs to the radical SAM superfamily. RlmN family. [4Fe-4S] cluster is required as a cofactor.

The protein localises to the cytoplasm. It catalyses the reaction adenosine(2503) in 23S rRNA + 2 reduced [2Fe-2S]-[ferredoxin] + 2 S-adenosyl-L-methionine = 2-methyladenosine(2503) in 23S rRNA + 5'-deoxyadenosine + L-methionine + 2 oxidized [2Fe-2S]-[ferredoxin] + S-adenosyl-L-homocysteine. The enzyme catalyses adenosine(37) in tRNA + 2 reduced [2Fe-2S]-[ferredoxin] + 2 S-adenosyl-L-methionine = 2-methyladenosine(37) in tRNA + 5'-deoxyadenosine + L-methionine + 2 oxidized [2Fe-2S]-[ferredoxin] + S-adenosyl-L-homocysteine. Its function is as follows. Specifically methylates position 2 of adenine 2503 in 23S rRNA and position 2 of adenine 37 in tRNAs. m2A2503 modification seems to play a crucial role in the proofreading step occurring at the peptidyl transferase center and thus would serve to optimize ribosomal fidelity. The protein is Dual-specificity RNA methyltransferase RlmN of Shigella flexneri serotype 5b (strain 8401).